The sequence spans 462 residues: Glutamate--tRNA ligase 1 (462 aa).

The 'HIGH' region motif lies at 8–18 (PSPTGYLHIGG). Residues 236–240 (KLSKR) carry the 'KMSKS' region motif. K239 contributes to the ATP binding site.

It belongs to the class-I aminoacyl-tRNA synthetase family. Glutamate--tRNA ligase type 1 subfamily. As to quaternary structure, monomer.

Its subcellular location is the cytoplasm. It catalyses the reaction tRNA(Glu) + L-glutamate + ATP = L-glutamyl-tRNA(Glu) + AMP + diphosphate. Catalyzes the attachment of glutamate to tRNA(Glu) in a two-step reaction: glutamate is first activated by ATP to form Glu-AMP and then transferred to the acceptor end of tRNA(Glu). The protein is Glutamate--tRNA ligase 1 of Sulfurovum sp. (strain NBC37-1).